The primary structure comprises 156 residues: Snaclec 2 (156 aa).

A signal peptide spans Met1 to Ala21. Intrachain disulfides connect Cys25–Cys36, Cys53–Cys150, and Cys125–Cys142. The C-type lectin domain occupies Phe32 to Lys151.

Belongs to the snaclec family. In terms of assembly, heterodimer; disulfide-linked. As to expression, expressed by the venom gland.

The protein localises to the secreted. Functionally, interferes with one step of hemostasis (modulation of platelet aggregation, or coagulation cascade, for example). In Bitis gabonica (Gaboon adder), this protein is Snaclec 2.